The chain runs to 287 residues: Rhodopsin (287 aa).

Topologically, residues 1–5 (VNGAA) are extracellular. A helical membrane pass occupies residues 6–30 (YAGLCAYMFLLILVGFPVNFLTLYV). The Cytoplasmic segment spans residues 31 to 42 (TLEHKKLRTPLN). The helical transmembrane segment at 43 to 65 (YILLNLAVADLFMVLGGFTTTMY) threads the bilayer. The Extracellular segment spans residues 66–79 (TSAHGYFVLGRLGC). A disulfide bridge connects residues Cys79 and Cys156. Residues 80 to 102 (NVEGFFATLGGEIALWSLVVLAV) traverse the membrane as a helical segment. Positions 103 to 105 (ERW) match the 'Ionic lock' involved in activated form stabilization motif. Residues 103 to 121 (ERWIVVCKPISNFRFTEEH) are Cytoplasmic-facing. The chain crosses the membrane as a helical span at residues 122–142 (AIMGLGFNWVMASACAVPPLV). Residues 143-171 (GWSRYIPEGMQCSCGINYYTRSEGFNNES) lie on the Extracellular side of the membrane. Asn169 is a glycosylation site (N-linked (GlcNAc...) asparagine). The helical transmembrane segment at 172 to 193 (LVMKMLICHFLIPLFVIFFCYG) threads the bilayer. The Cytoplasmic portion of the chain corresponds to 194-221 (RMLCAVKEAAAAQQESETTQRAEREVSR). A helical membrane pass occupies residues 222 to 243 (MVVIMVISFLVCWLPYASVAWY). Topologically, residues 244 to 255 (IFCNQGSEFGPV) are extracellular. Residues 256-277 (FMTLPAFFAKSASIYNPLIYIC) traverse the membrane as a helical segment. At Lys265 the chain carries N6-(retinylidene)lysine. The Cytoplasmic segment spans residues 278-287 (MNKHSRHCMI).

The protein belongs to the G-protein coupled receptor 1 family. Opsin subfamily. Post-translationally, phosphorylated on some or all of the serine and threonine residues present in the C-terminal region. In terms of processing, contains one covalently linked retinal chromophore.

The protein resides in the membrane. It is found in the cell projection. The protein localises to the cilium. It localises to the photoreceptor outer segment. Functionally, photoreceptor required for image-forming vision at low light intensity. While most salt water fish species use retinal as chromophore, most freshwater fish use 3-dehydroretinal, or a mixture of retinal and 3-dehydroretinal. Light-induced isomerization of 11-cis to all-trans retinal triggers a conformational change that activates signaling via G-proteins. Subsequent receptor phosphorylation mediates displacement of the bound G-protein alpha subunit by arrestin and terminates signaling. This Taurulus bubalis (Long-spined sea scorpion) protein is Rhodopsin (rho).